A 36-amino-acid polypeptide reads, in one-letter code: Mu/omega-theraphotoxin-Pmu1a (36 aa).

3 disulfide bridges follow: cysteine 2-cysteine 16, cysteine 9-cysteine 21, and cysteine 15-cysteine 29.

Belongs to the neurotoxin 10 (Hwtx-1) family. Expressed by the venom gland.

Its subcellular location is the secreted. In terms of biological role, gating-modifier toxin that targets both voltage-gated sodium and calcium channels, with described activities on human Nav1.7/SCN9A (IC(50)=5.5-7 nM), hNav1.6/SCN10A (IC(50)=9.9 nM), hNav1.4/SCN4A (IC(50)=62.9 nM), hCav3.2/CACNA1H (IC(50)=955.4 nM or 63.5% inhibition at 10 uM), hCav3.1/CACNA1G (95.1% inhibition at 10 uM), hCav3.3/CACNA1I (90.8% inhibition at 10 uM). Acts on Cav3 currents mainly by inducing a strong depolarizing shift in the current-voltage curve. The sequence is that of Mu/omega-theraphotoxin-Pmu1a from Pterinochilus murinus (Mombasa golden starburst baboon spider).